Here is a 778-residue protein sequence, read N- to C-terminus: Tubulin polyglutamylase ttll6 (778 aa).

Positions 1–43 (MGTPAERSVSEVCRCEPDPGLEGEGWGSDTHAEPSNTPIPLPV) are disordered. In terms of domain architecture, TTL spans 51–393 (KKKLWINLTN…LGACDRRKIT (343 aa)). ATP-binding positions include lysine 168, 174 to 175 (QG), 196 to 199 (QVYM), and 209 to 211 (KFD). Glutamine 174 is an a protein binding site. Arginine 235 provides a ligand contact to L-glutamate. ATP is bound at residue 257 to 258 (TN). Residues tyrosine 259 and lysine 277 each contribute to the L-glutamate site. Residues aspartate 340, glutamate 353, and asparagine 355 each contribute to the Mg(2+) site. Histidine 356 is an a protein binding site. The c-MTBD region stretch occupies residues 365–445 (RLDREVKDSL…MGGFRRIFPR (81 aa)). Lysine 371 provides a ligand contact to L-glutamate. Basic and acidic residues-rich tracts occupy residues 402 to 418 (ERLQ…EEPR), 485 to 510 (KQEQ…GEKV), 533 to 542 (SVREETPVSL), and 760 to 778 (LSHD…EHSL). Disordered stretches follow at residues 402-422 (ERLQ…QSQA), 485-542 (KQEQ…PVSL), and 758-778 (PHLS…EHSL).

Belongs to the tubulin--tyrosine ligase family. The cofactor is Mg(2+).

The protein localises to the cytoplasm. It localises to the cytoskeleton. The protein resides in the cilium axoneme. Its subcellular location is the cilium basal body. The catalysed reaction is L-glutamyl-[protein] + L-glutamate + ATP = gamma-L-glutamyl-L-glutamyl-[protein] + ADP + phosphate + H(+). It catalyses the reaction (L-glutamyl)(n)-gamma-L-glutamyl-L-glutamyl-[protein] + L-glutamate + ATP = (L-glutamyl)(n+1)-gamma-L-glutamyl-L-glutamyl-[protein] + ADP + phosphate + H(+). In terms of biological role, polyglutamylase which modifies both tubulin and non-tubulin proteins, generating alpha-linked polyglutamate side chains on the gamma-carboxyl group of specific glutamate residues of target proteins. Preferentially mediates ATP-dependent long polyglutamate chain elongation over the initiation step of the polyglutamylation reaction. Preferentially modifies the alpha-tubulin tail over a beta-tail. Mediates microtubule polyglutamylation in cilia axoneme, which is important for ciliary structural formation and motility. Polyglutamylates olfactory cilia, necessary for the regulation of ciliary structure and beating. This chain is Tubulin polyglutamylase ttll6, found in Danio rerio (Zebrafish).